The following is a 912-amino-acid chain: Ubiquitin carboxyl-terminal hydrolase 33 (912 aa).

The UBP-type zinc-finger motif lies at 6-109 (SHCPHLDSVG…PSLPHVKPLH (104 aa)). 12 residues coordinate Zn(2+): Cys8, His10, Cys30, Cys33, Cys43, Cys48, Cys53, His60, His64, His70, Cys83, and Cys86. A USP domain is found at 154-685 (TGLKNIGNTC…EAYVLFYRKS (532 aa)). Cys163 functions as the Nucleophile in the catalytic mechanism. The interval 274–334 (ETMEEDKSQS…NSEMSKDWQK (61 aa)) is disordered. Over residues 284-296 (DVDFQSCESCSSS) the composition is skewed to polar residues. Phosphoserine is present on residues Ser346 and Ser408. Positions 403–433 (PRLSASPPKSGNLWPGLPPTHKKVQSALSPK) are disordered. Residues 422-433 (THKKVQSALSPK) are compositionally biased toward basic residues. The active-site Proton acceptor is the His643. 2 consecutive DUSP domains span residues 687 to 780 (EEAQ…LYIC) and 788 to 891 (EKIE…RPPV).

The protein belongs to the peptidase C19 family. USP20/USP33 subfamily. As to quaternary structure, interacts with VHL, leading to its ubiquitination and subsequent degradation. Interacts with ARRB1 and ARRB2. Interacts with ADRB2. Interacts with DIO2. Interacts with ROBO1. Interacts with SELENBP1; in a selenium-dependent manner. Interacts with CCP110. In terms of processing, ubiquitinated via a VHL-dependent pathway for proteasomal degradation.

Its subcellular location is the cytoplasm. It is found in the perinuclear region. The protein localises to the cytoskeleton. The protein resides in the microtubule organizing center. It localises to the centrosome. It catalyses the reaction Thiol-dependent hydrolysis of ester, thioester, amide, peptide and isopeptide bonds formed by the C-terminal Gly of ubiquitin (a 76-residue protein attached to proteins as an intracellular targeting signal).. Deubiquitinating enzyme involved in various processes such as centrosome duplication, cellular migration and beta-2 adrenergic receptor/ADRB2 recycling. Involved in regulation of centrosome duplication by mediating deubiquitination of CCP110 in S and G2/M phase, leading to stabilize CCP110 during the period which centrioles duplicate and elongate. Involved in cell migration via its interaction with intracellular domain of ROBO1, leading to regulate the Slit signaling. Plays a role in commissural axon guidance cross the ventral midline of the neural tube in a Slit-dependent manner, possibly by mediating the deubiquitination of ROBO1. Acts as a regulator of G-protein coupled receptor (GPCR) signaling by mediating the deubiquitination of beta-arrestins (ARRB1 and ARRB2) and beta-2 adrenergic receptor (ADRB2). Plays a central role in ADRB2 recycling and resensitization after prolonged agonist stimulation by constitutively binding ADRB2, mediating deubiquitination of ADRB2 and inhibiting lysosomal trafficking of ADRB2. Upon dissociation, it is probably transferred to the translocated beta-arrestins, leading to beta-arrestins deubiquitination and disengagement from ADRB2. This suggests the existence of a dynamic exchange between the ADRB2 and beta-arrestins. Deubiquitinates DIO2, thereby regulating thyroid hormone regulation. Mediates deubiquitination of both 'Lys-48'- and 'Lys-63'-linked polyubiquitin chains. This chain is Ubiquitin carboxyl-terminal hydrolase 33 (USP33), found in Bos taurus (Bovine).